The sequence spans 457 residues: Flavohemoprotein-1 (457 aa).

Residues 2-157 form the Globin domain; the sequence is ALSEDTIKAV…LADLLIKREE (156 aa). Residue His-106 coordinates heme b. Active-site charge relay system residues include Tyr-116 and Glu-156. The reductase stretch occupies residues 168–456; that stretch reads GGWRQTRTFR…FEMFGPFKAS (289 aa). Positions 171–278 constitute an FAD-binding FR-type domain; the sequence is RQTRTFRVEE…APPYGDFFLR (108 aa). Residues Tyr-210 and 227–230 contribute to the FAD site; that span reads RQYS. Residue 320–325 participates in NADP(+) binding; sequence GIGQTP. Residue 449-452 participates in FAD binding; it reads MFGP.

It belongs to the globin family. Two-domain flavohemoproteins subfamily. This sequence in the C-terminal section; belongs to the flavoprotein pyridine nucleotide cytochrome reductase family. As to quaternary structure, monomer. Heme b is required as a cofactor. It depends on FAD as a cofactor.

It carries out the reaction 2 nitric oxide + NADPH + 2 O2 = 2 nitrate + NADP(+) + H(+). It catalyses the reaction 2 nitric oxide + NADH + 2 O2 = 2 nitrate + NAD(+) + H(+). Functionally, flavohemoprotein involved in nitric oxide (NO) detoxification in an aerobic process, termed nitric oxide dioxygenase (NOD) reaction that utilizes O(2) and NAD(P)H to convert NO to nitrate, which protects the protozoan parasite from various noxious nitrogen compounds. Therefore, plays a central role in the inducible response to nitrosative stress. May also be involved in O(2) detoxification. In Giardia intestinalis (strain P15) (Giardia lamblia), this protein is Flavohemoprotein-1 (hmpA-1).